A 432-amino-acid polypeptide reads, in one-letter code: Proline--tRNA ligase (432 aa).

This sequence belongs to the class-II aminoacyl-tRNA synthetase family. ProS type 2 subfamily. In terms of assembly, homodimer.

It localises to the cytoplasm. It catalyses the reaction tRNA(Pro) + L-proline + ATP = L-prolyl-tRNA(Pro) + AMP + diphosphate. Functionally, catalyzes the attachment of proline to tRNA(Pro) in a two-step reaction: proline is first activated by ATP to form Pro-AMP and then transferred to the acceptor end of tRNA(Pro). This Rickettsia bellii (strain OSU 85-389) protein is Proline--tRNA ligase.